Consider the following 160-residue polypeptide: Endoribonuclease YbeY (160 aa).

3 residues coordinate Zn(2+): H125, H129, and H135.

The protein belongs to the endoribonuclease YbeY family. Zn(2+) is required as a cofactor.

The protein resides in the cytoplasm. Functionally, single strand-specific metallo-endoribonuclease involved in late-stage 70S ribosome quality control and in maturation of the 3' terminus of the 16S rRNA. The chain is Endoribonuclease YbeY from Leuconostoc citreum (strain KM20).